The chain runs to 530 residues: Phosphoenolpyruvate carboxykinase (ATP) 2 (530 aa).

Substrate is bound by residues Arg-54, Tyr-191, and Lys-197. ATP is bound by residues Lys-197, His-216, and 232–240; that span reads GLSGTGKTT. Mn(2+) is bound by residues Lys-197 and His-216. Asp-253 contributes to the Mn(2+) binding site. Residues Glu-281, Arg-318, 437–438, and Thr-443 contribute to the ATP site; that span reads RV. Arg-318 contributes to the substrate binding site.

The protein belongs to the phosphoenolpyruvate carboxykinase (ATP) family. It depends on Mn(2+) as a cofactor.

It is found in the cytoplasm. It carries out the reaction oxaloacetate + ATP = phosphoenolpyruvate + ADP + CO2. It functions in the pathway carbohydrate biosynthesis; gluconeogenesis. Involved in the gluconeogenesis. Catalyzes the conversion of oxaloacetate (OAA) to phosphoenolpyruvate (PEP) through direct phosphoryl transfer between the nucleoside triphosphate and OAA. The polypeptide is Phosphoenolpyruvate carboxykinase (ATP) 2 (Salinibacter ruber (strain DSM 13855 / M31)).